The following is a 419-amino-acid chain: Transcription termination factor Rho (419 aa).

The Rho RNA-BD domain occupies 48–123 (DIFGDGVLEI…LKVNEVNYDK (76 aa)). RNA-binding regions lie at residues 61-66 (GFGFLR), 78-80 (DIY), and 108-110 (ERY). ATP contacts are provided by residues 169-174 (GRGQRG), 181-186 (KAGKTM), and Arg212. The interval 284-288 (VLTGG) is RNA-binding 2.

It belongs to the Rho family. As to quaternary structure, homohexamer. The homohexamer assembles into an open ring structure.

In terms of biological role, facilitates transcription termination by a mechanism that involves Rho binding to the nascent RNA, activation of Rho's RNA-dependent ATPase activity, and release of the mRNA from the DNA template. In Salmonella typhi, this protein is Transcription termination factor Rho.